The chain runs to 402 residues: Serine/threonine-protein kinase US3 homolog (402 aa).

Disordered stretches follow at residues 1–21 and 46–88; these read MSST…KVHD and FPDS…SPET. Positions 102–386 constitute a Protein kinase domain; it reads YNIVSSLPPG…AQDILMLPLF (285 aa). ATP contacts are provided by residues 110–118 and Lys127; that span reads PGSEGYIYV. The Proton acceptor role is filled by Asp218.

It belongs to the protein kinase superfamily. Ser/Thr protein kinase family. Phosphorylated by UL13 homolog; this phosphorylation regulates subsequent phosphorylation of UL31 and UL34 homologs by US3. Autophosphorylated.

The protein resides in the host cytoplasm. The protein localises to the host nucleus. The enzyme catalyses L-seryl-[protein] + ATP = O-phospho-L-seryl-[protein] + ADP + H(+). It carries out the reaction L-threonyl-[protein] + ATP = O-phospho-L-threonyl-[protein] + ADP + H(+). Multifunctional serine/threonine kinase that plays a role in several processes including egress of virus particles from the nucleus, modulation of the actin cytoskeleton and inhibition of apoptosis. Phosphorylates UL31 and UL34 homologs, two critical regulators of capsid budding from nucleus to endoplasmic reticulum, thereby facilitating virion egress. Modulates and redistributes host components of the nuclear envelope, including LMNA, emerin/EMD and the nuclear matrix protein MATR3. Phosphorylates envelope glycoprotein B (gB), probably to direct it to the cell surface. Promotes virus intracellular spread by restructuring host cell cytoskeleton. Blocks host apoptosis to extend cell survival and allow efficient viral replication. Promotes viral gene expression by phosphorylating host HDAC2 to reduce viral genome silencing. The sequence is that of Serine/threonine-protein kinase US3 homolog (US1206) from Gallid herpesvirus 2 (strain GA) (GaHV-2).